The primary structure comprises 83 residues: Cytochrome b559 subunit alpha (83 aa).

The chain crosses the membrane as a helical span at residues 21-35 (VIHSITIPSLFIAGW). His23 contributes to the heme binding site.

This sequence belongs to the PsbE/PsbF family. As to quaternary structure, heterodimer of an alpha subunit and a beta subunit. PSII is composed of 1 copy each of membrane proteins PsbA, PsbB, PsbC, PsbD, PsbE, PsbF, PsbH, PsbI, PsbJ, PsbK, PsbL, PsbM, PsbT, PsbX, PsbY, PsbZ, Psb30/Ycf12, at least 3 peripheral proteins of the oxygen-evolving complex and a large number of cofactors. It forms dimeric complexes. Heme b serves as cofactor.

Its subcellular location is the plastid. It localises to the chloroplast thylakoid membrane. Functionally, this b-type cytochrome is tightly associated with the reaction center of photosystem II (PSII). PSII is a light-driven water:plastoquinone oxidoreductase that uses light energy to abstract electrons from H(2)O, generating O(2) and a proton gradient subsequently used for ATP formation. It consists of a core antenna complex that captures photons, and an electron transfer chain that converts photonic excitation into a charge separation. The chain is Cytochrome b559 subunit alpha from Chara vulgaris (Common stonewort).